The sequence spans 1030 residues: Kinesin-related protein 6 (1030 aa).

The SAM domain maps to 3–66; it reads FENDQLYNWL…FHLLQQLKKQ (64 aa). 2 disordered regions span residues 66–164 and 178–308; these read QTPP…SDFM and RQQY…EDDD. The span at 68-80 shows a compositional bias: polar residues; that stretch reads PPISNTSSPVINS. Composition is skewed to low complexity over residues 81–117, 125–164, 181–197, and 225–238; these read NNNN…NNNN, TSTS…SDFM, YAKQ…KYQS, and QQQQ…QQQD. The segment covering 239–290 has biased composition (acidic residues); it reads FEFEEEEEEEDQQQQYDEEEEEEEEYEEDFYKEDLGEIDDGNVLDISDDEPD. A Kinesin motor domain is found at 453 to 775; it reads RIRVCVRKRP…LRYADRVKEL (323 aa). 543 to 550 is a binding site for ATP; that stretch reads GQTGSGKT. Low complexity-rich tracts occupy residues 826–839, 849–906, and 981–1009; these read INSQ…TSQP, QQQE…QTQP, and PIQQ…QTPQ. Disordered regions lie at residues 826–915 and 981–1030; these read INSQ…KIDF and PIQQ…SSRN.

It belongs to the TRAFAC class myosin-kinesin ATPase superfamily. Kinesin family.

Its subcellular location is the cytoplasm. The protein localises to the cytoskeleton. Its function is as follows. Microtubule-associated force-producing protein that plays a role in organelle transport. Its motor activity is directed toward the microtubule's plus end. This Dictyostelium discoideum (Social amoeba) protein is Kinesin-related protein 6 (kif6).